The following is a 358-amino-acid chain: MAQQRGVNSLQFNQDQSCFCCAMETGVRIYNVEPLMEKGHLDHEQVGSIALCSMLHRSNLLAVVGGGVNPKFSEISVLIWDDAREVRDPKDKLVLEFTFTKPVLAVRMRHDKIIIILKNRIYVYSFPDNPVKLFEFDTRDNPKGLCDLCPSLEKQLLVFPGHKCGSLQLVDLSNTKPGTSSAPFTINAHQSEIACLALNQPGSVVASASRKGTLIRLFDTTTRDKLVELRRGTDPATLYCINFSHDSSFLCASSDKGTVHIFALKDTKLNRRSALARVGKVGPVIGQYVDSQWSLANFTVPAECACICAFGKNTSKNVNSVIAICVDGTFHKYVFTPDGNCNREAFDVYLDICDDDDF.

2 WD repeats span residues 2-40 and 188-228; these read AQQR…EKGH and AHQS…KLVE. The short motif at 229–232 is the L/FRRG motif element; the sequence is LRRG. The WD 3 repeat unit spans residues 233-272; the sequence is TDPATLYCINFSHDSSFLCASSDKGTVHIFALKDTKLNRR.

It belongs to the WD repeat PROPPIN family.

Its subcellular location is the preautophagosomal structure. Functionally, component of the autophagy machinery that controls the major intracellular degradation process by which cytoplasmic materials are packaged into autophagosomes and delivered to lysosomes for degradation. Binds phosphatidylinositol 3-phosphate (PtdIns3P). This is WD repeat domain phosphoinositide-interacting protein 4 (wdr45) from Danio rerio (Zebrafish).